Reading from the N-terminus, the 1523-residue chain is Slit homolog 3 protein (1523 aa).

The N-terminal stretch at 1–33 is a signal peptide; sequence MALGRTGAGAAVRARLALGLALASILSGPPAAA. The 28-residue stretch at 34–61 folds into the LRRNT domain; the sequence is CPTKCTCSAASVDCHGLGLRAVPRGIPR. LRR repeat units follow at residues 62-83, 86-107, 110-131, 134-155, 158-179, and 182-203; these read NAERLDLDRNNITRITKMDFAG, NLRVLHLEDNQVSIIERGAFQD, QLERLRLNKNKLQVLPELLFQS, KLTRLDLSENQIQGIPRKAFRG, GVKNLQLDNNHISCIEDGAFRA, and DLEILTLNNNNISRILVTSFNH. A glycan (N-linked (GlcNAc...) asparagine) is linked at asparagine 72. An N-linked (GlcNAc...) asparagine glycan is attached at asparagine 192. Residues 215–265 form the LRRCT 1 domain; the sequence is NHLYCDCHLAWLSDWLRQRRTIGQFTLCMAPVHLRGFSVADVQKKEYVCPG. The LRRNT 2 domain maps to 271-307; that stretch reads PACNANSLSCPSACSCSNNIVDCRGKGLTEIPANLPE. A disulfide bridge connects residues cysteine 284 and cysteine 293. LRR repeat units lie at residues 308–329, 332–353, 356–377, 380–401, and 404–425; these read GIVEIRLEQNSIKSIPAGAFTQ, KLKRIDISKNQISDIAPDAFQG, SLTSLVLYGNKITEIPKGLFDG, SLQLLLLNANKINCLRVNTFQD, and NLNLLSLYDNKLQTISKGLFVP. The 51-residue stretch at 437–487 folds into the LRRCT 2 domain; it reads NPFVCDCHLKWLADYLQDNPIETSGARCSSPRRLANKRISQIKSKKFRCSG. Intrachain disulfides connect cysteine 441–cysteine 464, cysteine 443–cysteine 485, cysteine 505–cysteine 511, and cysteine 509–cysteine 518. The 37-residue stretch at 496–532 folds into the LRRNT 3 domain; it reads SSECFMDLVCPEKCRCEGTIVDCSNQKLARIPSHLPE. 5 LRR repeats span residues 533–554, 558–579, 582–603, 606–627, and 630–651; these read YTTDLRLNDNDISVLEATGIFK, NLRKINLSNNRIKEVREGAFDG, GVQELMLTGNQLETMHGRMFRG, SLKTLMLRSNLISCVSNDTFAG, and SVRLLSLYDNRITTITPGAFTT. Asparagine 563 carries an N-linked (GlcNAc...) asparagine glycan. N-linked (GlcNAc...) asparagine glycosylation occurs at asparagine 622. The region spanning 663 to 713 is the LRRCT 3 domain; the sequence is NPFNCNCHMAWLGRWLRKRRIVSGNPRCQKPFFLKEIPIQDVAIQDFTCDG. Intrachain disulfides connect cysteine 667/cysteine 690 and cysteine 669/cysteine 711. Residues 716–752 form the LRRNT 4 domain; that stretch reads ESSCQLSPRCPEQCTCVETVVRCSNRGLHALPKGMPK. LRR repeat units follow at residues 753–774, 776–797, 800–821, and 824–845; these read DVTELYLEGNHLTAVPKELSAF, QLTLIDLSNNSISMLTNHTFSN, HLSTLILSYNRLRCIPVHAFNG, and SLRVLTLHGNDISSVPEGSFND. Asparagine 784, asparagine 792, and asparagine 797 each carry an N-linked (GlcNAc...) asparagine glycan. The LRRCT 4 domain maps to 857 to 907; that stretch reads NPLHCDCSLRWLSEWVKAGYKEPGIARCSSPESMADRLLLTTPTHRFQCKG. EGF-like domains follow at residues 918-953, 955-994, 996-1032, 1034-1072, 1074-1110, and 1119-1155; these read NACLSSPCKNNGTCSQDPVEQYRCTCPYSYKGKDCT, PINTCVQNPCEHGGTCHLSENLRDGFSCSCPLGFEGQRCE, NPDDCEDNDCENSATCVDGINNYACLCPPNYTGELCD, VIDYCVPEMNLCQHEAKCISLDKGFRCECVPGYSGKLCE, NNDDCVAHKCRHGAQCVDEVNGYTCICPQGFSGLFCE, and QTSPCDQYECQNGAQCIVVQQEPTCRCPPGFAGPRCE. Disulfide bonds link cysteine 920-cysteine 931, cysteine 925-cysteine 941, cysteine 943-cysteine 952, cysteine 959-cysteine 970, cysteine 964-cysteine 982, cysteine 984-cysteine 993, cysteine 1000-cysteine 1011, cysteine 1005-cysteine 1020, cysteine 1022-cysteine 1031, cysteine 1038-cysteine 1051, cysteine 1045-cysteine 1060, cysteine 1062-cysteine 1071, cysteine 1078-cysteine 1089, cysteine 1083-cysteine 1098, cysteine 1100-cysteine 1109, cysteine 1123-cysteine 1134, cysteine 1128-cysteine 1143, and cysteine 1145-cysteine 1154. The N-linked (GlcNAc...) asparagine glycan is linked to asparagine 928. N-linked (GlcNAc...) asparagine glycosylation occurs at asparagine 1025. The Laminin G-like domain occupies 1158–1332; it reads ITVNFVGKDS…PQSLGVSPGC (175 aa). N-linked (GlcNAc...) asparagine glycans are attached at residues asparagine 1181 and asparagine 1247. 5 cysteine pairs are disulfide-bonded: cysteine 1305/cysteine 1332, cysteine 1355/cysteine 1364, cysteine 1372/cysteine 1382, cysteine 1377/cysteine 1391, and cysteine 1393/cysteine 1402. EGF-like domains lie at 1340–1365 and 1368–1403; these read HGLCRSVEKDSVVCECHPGWTGPLCD and ARDPCLGHSCRHGTCMATGDSYVCKCAEGYGGALCD. The N-linked (GlcNAc...) asparagine glycan is linked to asparagine 1406. Residues 1408–1444 enclose the EGF-like 9 domain; sequence SASACSAFKCHHGQCHISDRGEPYCLCQPGFSGHHCE. 7 disulfides stabilise this stretch: cysteine 1412–cysteine 1422, cysteine 1417–cysteine 1432, cysteine 1434–cysteine 1443, cysteine 1449–cysteine 1487, cysteine 1467–cysteine 1501, cysteine 1478–cysteine 1517, and cysteine 1482–cysteine 1519. A CTCK domain is found at 1449–1523; it reads CMGEIVREAI…HLECGCRACS (75 aa).

Its subcellular location is the secreted. Its function is as follows. May act as molecular guidance cue in cellular migration, and function may be mediated by interaction with roundabout homolog receptors. This is Slit homolog 3 protein (Slit3) from Mus musculus (Mouse).